The chain runs to 175 residues: Peptide methionine sulfoxide reductase MsrA (175 aa).

C10 is a catalytic residue.

The protein belongs to the MsrA Met sulfoxide reductase family.

The catalysed reaction is L-methionyl-[protein] + [thioredoxin]-disulfide + H2O = L-methionyl-(S)-S-oxide-[protein] + [thioredoxin]-dithiol. It carries out the reaction [thioredoxin]-disulfide + L-methionine + H2O = L-methionine (S)-S-oxide + [thioredoxin]-dithiol. Has an important function as a repair enzyme for proteins that have been inactivated by oxidation. Catalyzes the reversible oxidation-reduction of methionine sulfoxide in proteins to methionine. This Clavibacter sepedonicus (Clavibacter michiganensis subsp. sepedonicus) protein is Peptide methionine sulfoxide reductase MsrA.